A 354-amino-acid chain; its full sequence is UDP-N-acetylglucosamine--N-acetylmuramyl-(pentapeptide) pyrophosphoryl-undecaprenol N-acetylglucosamine transferase (354 aa).

UDP-N-acetyl-alpha-D-glucosamine-binding residues include Ser196 and Gln288.

The protein belongs to the glycosyltransferase 28 family. MurG subfamily.

The protein localises to the cell membrane. It carries out the reaction Mur2Ac(oyl-L-Ala-gamma-D-Glu-L-Lys-D-Ala-D-Ala)-di-trans,octa-cis-undecaprenyl diphosphate + UDP-N-acetyl-alpha-D-glucosamine = beta-D-GlcNAc-(1-&gt;4)-Mur2Ac(oyl-L-Ala-gamma-D-Glu-L-Lys-D-Ala-D-Ala)-di-trans,octa-cis-undecaprenyl diphosphate + UDP + H(+). The protein operates within cell wall biogenesis; peptidoglycan biosynthesis. Cell wall formation. Catalyzes the transfer of a GlcNAc subunit on undecaprenyl-pyrophosphoryl-MurNAc-pentapeptide (lipid intermediate I) to form undecaprenyl-pyrophosphoryl-MurNAc-(pentapeptide)GlcNAc (lipid intermediate II). In Streptococcus suis (strain 98HAH33), this protein is UDP-N-acetylglucosamine--N-acetylmuramyl-(pentapeptide) pyrophosphoryl-undecaprenol N-acetylglucosamine transferase.